A 57-amino-acid chain; its full sequence is UPF0391 membrane protein azo1765 (57 aa).

2 helical membrane passes run 1–21 (MIKW…FGFT) and 33–53 (VLFF…VGLG).

This sequence belongs to the UPF0391 family.

It is found in the cell membrane. The sequence is that of UPF0391 membrane protein azo1765 from Azoarcus sp. (strain BH72).